The primary structure comprises 349 residues: MVTYKDAGVDIYKEDKVIRALASQIKFERTDAIKPADLKGHYAGAIEFGDYYLVLCTDGVGSKMVVAEMANKFDTVPIDMIAMNVNDAICIGAEPVALVDYMAVEDITEDIASQIGKGLNDGIKESNINLIGGETASLPNMIKGVDLAGTVLAVVKKDEIVSGKEVKPGNVIVGLRSSGIHSNGLSLARKVFFEISNLDVKSKLSHGKTVAEELLTPTKIYVKPVLEMIKQVNVKGLAHITGGGFRKLKRLNKDVCYKIDELPEILPIFKEIQNLGNVADQEMFKTFNMGIGFCVIVEKDDAEKIIEISNHHNIAAFVIGKIEESVEVNGETKRETVLVEYNNKKMIME.

It belongs to the AIR synthase family.

Its subcellular location is the cytoplasm. The catalysed reaction is 2-formamido-N(1)-(5-O-phospho-beta-D-ribosyl)acetamidine + ATP = 5-amino-1-(5-phospho-beta-D-ribosyl)imidazole + ADP + phosphate + H(+). Its pathway is purine metabolism; IMP biosynthesis via de novo pathway; 5-amino-1-(5-phospho-D-ribosyl)imidazole from N(2)-formyl-N(1)-(5-phospho-D-ribosyl)glycinamide: step 2/2. The polypeptide is Phosphoribosylformylglycinamidine cyclo-ligase (Methanococcus maripaludis (strain C7 / ATCC BAA-1331)).